We begin with the raw amino-acid sequence, 3072 residues long: Platelet binding protein GspB (3072 aa).

A signal peptide spans 1–85 (MFFKRQKGQY…AVLGGAVVTS (85 aa)). Disordered stretches follow at residues 117–147 (EAATTLSSTEANPVESLSDTLSASESTSASS), 182–254 (SESL…APNV), 876–909 (SASTSASVSASESASTSASVSASESASTSASVSA), 936–969 (SASTSASVSASESASTSASVSASESASTSASVSA), 1024–2085 (SASV…SVSA), 2106–2139 (SASTSASVSASESASTSASVSASESASTSASVSA), 2173–2223 (VSAS…SVSA), 2250–2595 (SAST…SVSA), 2625–2965 (TSAS…NASV), and 3014–3045 (SQSLSESQSSSASQSMHDRISKGQLPRTGESE). Polar residues predominate over residues 118-127 (AATTLSSTEA). The segment at 123-236 (SSTEANPVES…SSQQSTEASS (114 aa)) is ser-rich region 1 (SSR1). 2 stretches are compositionally biased toward low complexity: residues 131-147 (ESLSDTLSASESTSASS) and 182-238 (SESL…SSQT). Positions 237–603 (QTGRRRTRRA…GSKFIDTRAG (367 aa)) are basic region (BR). The interval 604–3028 (SISKSQSTSN…ESQSSSASQS (2425 aa)) is ser-rich region 2 (SSR2). Residues 3014–3028 (SQSLSESQSSSASQS) are compositionally biased toward low complexity. The LPXTG sorting signal signature appears at 3038-3042 (LPRTG). T3041 is subject to Pentaglycyl murein peptidoglycan amidated threonine. Positions 3042–3072 (GESENKASILALGLGALGLAFKKRKKNESED) are cleaved as a propeptide — removed by sortase.

It belongs to the serine-rich repeat protein (SRRP) family. In terms of assembly, both SSR domains in the unglycosylated protein bind to Asp2 and Asp3; glycosylated protein binds less well. Interacts with the human cell surface glycoprotein GP1BA. Proteolytically cleaved by a metalloprotease. In terms of processing, both SSR1 and SSR2 domains are glycosylated. A truncated derivative (residues 1-2062) contains 105 nmol per nmol of protein, suggesting at least 10% of the apparent molecular weight is due to carbohydrates. Glucose and N-acetylglucosamine are present in a ratio of 30:73 residues per truncated polypeptide, as well as minor amounts of galactose and N-acetylgalactosamine. Glycosylation occurs intracellularly in the Ser-rich regions SSR1 and SSR2. Glycosylation of SSR2 domain may be required to prevent aggregation of GspB. It is probable that most of the Ser residues in SSR1 and SSR2 are O-GlcNAcylated. Sequential glycosylation by sugar transferases are able to generate complex sugar polymorphisms.

It is found in the secreted. The protein localises to the cell wall. Plays a role in virulence and host-pathogen interactions. Mediates binding to human platelets via interaction with the human cell surface glycoprotein GP1BA. Plays a positive role in biofilm formation, possibly by self-association via the basic region (BR). The sequence is that of Platelet binding protein GspB (gspB) from Streptococcus gordonii.